The sequence spans 199 residues: NAD(P)H dehydrogenase (quinone) 1 (199 aa).

The region spanning 4 to 190 is the Flavodoxin-like domain; it reads VLVLYYSAYG…EAARFQGAHV (187 aa). Residues 10-15 and 78-80 each bind FMN; these read SAYGHI and TRY. Tyr12 is an NAD(+) binding site. Position 98 (Trp98) interacts with substrate. FMN is bound by residues 113–119 and His134; that span reads SSATQHG.

This sequence belongs to the WrbA family. FMN serves as cofactor.

It carries out the reaction a quinone + NADH + H(+) = a quinol + NAD(+). The enzyme catalyses a quinone + NADPH + H(+) = a quinol + NADP(+). This chain is NAD(P)H dehydrogenase (quinone) 1, found in Rhizobium meliloti (strain 1021) (Ensifer meliloti).